A 98-amino-acid polypeptide reads, in one-letter code: MKSITVICFLALCTVAITSAYPQEPVLADEARPFANSLFDELPEETYQAAVENFRLKRATCDLLSGFGVGDSACAAHCIARGNRGGYCNSQKVCVCRN.

The N-terminal stretch at 1–20 is a signal peptide; it reads MKSITVICFLALCTVAITSA. The propeptide occupies 21–58; it reads YPQEPVLADEARPFANSLFDELPEETYQAAVENFRLKR. Intrachain disulfides connect C61-C88, C74-C94, and C78-C96.

Belongs to the invertebrate defensin family. Type 1 subfamily.

The protein localises to the secreted. Antibacterial peptide mostly active against Gram-positive bacteria. The chain is Defensin-B (DEFB) from Aedes aegypti (Yellowfever mosquito).